The sequence spans 128 residues: EPIDERMAL PATTERNING FACTOR-like protein 2 (128 aa).

Residues 1–28 (MVWSSNMSSFLLILLILNSTHFSLMANG) form the signal peptide. 3 disulfide bridges follow: Cys60–Cys119, Cys65–Cys71, and Cys68–Cys121. Polar residues predominate over residues 79 to 90 (NPQTKLHSPLTT). The disordered stretch occupies residues 79–100 (NPQTKLHSPLTTSSSSSSETIH).

The protein belongs to the plant cysteine rich small secretory peptide family. Epidermal patterning factor subfamily.

It localises to the secreted. In terms of biological role, controls stomatal patterning. The sequence is that of EPIDERMAL PATTERNING FACTOR-like protein 2 from Arabidopsis thaliana (Mouse-ear cress).